The following is a 238-amino-acid chain: Transcription termination/antitermination protein NusG (238 aa).

It belongs to the NusG family.

Participates in transcription elongation, termination and antitermination. The chain is Transcription termination/antitermination protein NusG from Mycobacterium tuberculosis (strain CDC 1551 / Oshkosh).